A 547-amino-acid polypeptide reads, in one-letter code: Dihydrolipoyllysine-residue acetyltransferase component of pyruvate dehydrogenase complex (547 aa).

The Lipoyl-binding 1 domain occupies 2 to 75 (SELIRVPDIG…KEGDEILELE (74 aa)). Lys-41 is modified (N6-lipoyllysine). The tract at residues 75-117 (EVEGGEQPAEAKAEAAPAQPEAPKAEAPAPAPSESKPAAPAAA) is disordered. A compositionally biased stretch (low complexity) spans 80 to 117 (EQPAEAKAEAAPAQPEAPKAEAPAPAPSESKPAAPAAA). The Lipoyl-binding 2 domain maps to 119–193 (VQDIKVPDIG…GTGDLILKLK (75 aa)). Lys-159 bears the N6-lipoyllysine mark. A compositionally biased stretch (low complexity) spans 202-231 (EEQPAAAPAQAAAPAAEQKPAAAAPAPAKA). Positions 202–248 (EEQPAAAPAQAAAPAAEQKPAAAAPAPAKADTPAPVGAPSRDGAKVH) are disordered. In terms of domain architecture, Peripheral subunit-binding (PSBD) spans 248-285 (HAGPAVRMLAREFGVELSEVKASGPKGRILKEDVQVFV). His-520 is a catalytic residue.

Belongs to the 2-oxoacid dehydrogenase family. In terms of assembly, forms a 24-polypeptide structural core with octahedral symmetry. It depends on (R)-lipoate as a cofactor.

It catalyses the reaction N(6)-[(R)-dihydrolipoyl]-L-lysyl-[protein] + acetyl-CoA = N(6)-[(R)-S(8)-acetyldihydrolipoyl]-L-lysyl-[protein] + CoA. In terms of biological role, the pyruvate dehydrogenase complex catalyzes the overall conversion of pyruvate to acetyl-CoA and CO(2). It contains multiple copies of three enzymatic components: pyruvate dehydrogenase (E1), dihydrolipoamide acetyltransferase (E2) and lipoamide dehydrogenase (E3). In Pseudomonas aeruginosa (strain ATCC 15692 / DSM 22644 / CIP 104116 / JCM 14847 / LMG 12228 / 1C / PRS 101 / PAO1), this protein is Dihydrolipoyllysine-residue acetyltransferase component of pyruvate dehydrogenase complex (aceF).